The primary structure comprises 1560 residues: Vacuolar membrane-associated protein IML1 (1560 aa).

Disordered regions lie at residues 1-30 (MHDA…KPLR), 188-212 (SSLH…NNNN), 617-654 (FKPV…NSKP), and 756-784 (YKSD…SSTK). Over residues 7–19 (FNSSSNKTMNQND) the composition is skewed to polar residues. Residues 617–630 (FKPVNKDSDSKVTR) show a composition bias toward basic and acidic residues. Polar residues predominate over residues 631–649 (ELSSSPEQSTINSKTGTPK). Residues 767-776 (KSRDILDSKS) are compositionally biased toward basic and acidic residues. In terms of domain architecture, DEP spans 1147-1222 (SPTGVRLVDR…DGYYFYTFEG (76 aa)). Positions 1237-1270 (GWFNRKKNSSEKGSAVTSPTYTRNNSDTESAKSP) are disordered. Over residues 1247–1264 (EKGSAVTSPTYTRNNSDT) the composition is skewed to polar residues.

It belongs to the IML1 family.

It is found in the vacuole membrane. This is Vacuolar membrane-associated protein IML1 (IML1) from Debaryomyces hansenii (strain ATCC 36239 / CBS 767 / BCRC 21394 / JCM 1990 / NBRC 0083 / IGC 2968) (Yeast).